Reading from the N-terminus, the 586-residue chain is Pyruvate kinase (586 aa).

Residue arginine 32 coordinates substrate. K(+)-binding residues include asparagine 34, serine 36, aspartate 66, and threonine 67. 34-37 is an ATP binding site; sequence NFSH. The ATP site is built by arginine 73 and lysine 156. Glutamate 222 is a Mg(2+) binding site. Glycine 245, aspartate 246, and threonine 278 together coordinate substrate. Position 246 (aspartate 246) interacts with Mg(2+).

This sequence belongs to the pyruvate kinase family. It in the C-terminal section; belongs to the PEP-utilizing enzyme family. The cofactor is Mg(2+). K(+) is required as a cofactor.

It catalyses the reaction pyruvate + ATP = phosphoenolpyruvate + ADP + H(+). It functions in the pathway carbohydrate degradation; glycolysis; pyruvate from D-glyceraldehyde 3-phosphate: step 5/5. The polypeptide is Pyruvate kinase (pyk) (Staphylococcus saprophyticus subsp. saprophyticus (strain ATCC 15305 / DSM 20229 / NCIMB 8711 / NCTC 7292 / S-41)).